The following is a 472-amino-acid chain: Acetyl-CoA decarbonylase/synthase complex subunit beta 2 (472 aa).

[Ni-Fe-S] cluster-binding residues include cysteine 189, cysteine 192, cysteine 278, and cysteine 280.

The protein belongs to the CdhC family. As to quaternary structure, monomer. The ACDS complex is made up of alpha, epsilon, beta, gamma and delta chains with a probable stoichiometry of (alpha(2)epsilon(2))(4)-beta(8)-(gamma(1)delta(1))(8) (Potential). Requires [Ni-Fe-S] cluster as cofactor.

It catalyses the reaction Co(I)-[corrinoid Fe-S protein] + acetyl-CoA + H(+) = methyl-Co(III)-[corrinoid Fe-S protein] + CO + CoA. It functions in the pathway one-carbon metabolism; methanogenesis from acetate. Part of a complex that catalyzes the reversible cleavage of acetyl-CoA, allowing growth on acetate as sole source of carbon and energy. The alpha-epsilon complex generates CO from CO(2), while the beta subunit (this protein) combines the CO with CoA and a methyl group to form acetyl-CoA. The methyl group, which is incorporated into acetyl-CoA, is transferred to the beta subunit by a corrinoid iron-sulfur protein (the gamma-delta complex). This is Acetyl-CoA decarbonylase/synthase complex subunit beta 2 (cdhC2) from Methanosarcina thermophila.